Consider the following 128-residue polypeptide: Small nuclear ribonucleoprotein associated homolog 13 (128 aa).

Belongs to the eukaryotic ribosomal protein eL8 family.

Its subcellular location is the nucleus. The protein resides in the nucleolus. Its function is as follows. Binds to the 5'-stem-loop of U4 snRNA and may play a role in the late stage of spliceosome assembly. The protein undergoes a conformational change upon RNA-binding. This is Small nuclear ribonucleoprotein associated homolog 13 from Caenorhabditis elegans.